A 559-amino-acid chain; its full sequence is Glucose-6-phosphate isomerase 4 (559 aa).

Glutamate 356 functions as the Proton donor in the catalytic mechanism. Residues histidine 387 and lysine 513 contribute to the active site.

This sequence belongs to the GPI family.

Its subcellular location is the cytoplasm. The enzyme catalyses alpha-D-glucose 6-phosphate = beta-D-fructose 6-phosphate. It functions in the pathway carbohydrate biosynthesis; gluconeogenesis. It participates in carbohydrate degradation; glycolysis; D-glyceraldehyde 3-phosphate and glycerone phosphate from D-glucose: step 2/4. Functionally, catalyzes the reversible isomerization of glucose-6-phosphate to fructose-6-phosphate. The chain is Glucose-6-phosphate isomerase 4 from Rhodococcus jostii (strain RHA1).